The chain runs to 354 residues: MGIGISSESKESAKRSKELEKKLQEDAERDARTVKLLLLGAGESGKSTIVKQMKIIHKNGYSEQECMEFKAVIYSNTLQSILAIVKAMATLEIDYVNPRSAEDQQQLCAMANTLEDGSMTPELAEIIKRLWRDPGVQACFERASEYQLNDSAAYYLNDLDRIAAPGYVPNEQDVLHSRVKTTGIIETQFSFKDLHFRMFDVGGQRSERKKWIHCFEGVTCIIFCAALSAYDMVLVEDEEVNRMHESLHLFNSICNHKYFATTSIVLFLNKKDLFQEKVTKVHLSICFPEYTGPNTFEDAGNYIKNQFLDLNLKKEDKEIYSHMTCATDTQNVKFVFDAVTDIIIKENLKDCGLF.

The segment at 1 to 26 (MGIGISSESKESAKRSKELEKKLQED) is disordered. Gly-2 is lipidated: N-myristoyl glycine. The segment covering 8-26 (ESKESAKRSKELEKKLQED) has biased composition (basic and acidic residues). Positions 32–354 (RTVKLLLLGA…KENLKDCGLF (323 aa)) constitute a G-alpha domain. The segment at 35–48 (KLLLLGAGESGKST) is G1 motif. GTP-binding positions include 40 to 47 (GAGESGKS), 175 to 181 (LHSRVKT), 200 to 204 (DVGGQ), 269 to 272 (NKKD), and Ala-326. Mg(2+)-binding residues include Ser-47 and Thr-181. The interval 173 to 181 (DVLHSRVKT) is G2 motif. A G3 motif region spans residues 196-205 (FRMFDVGGQR). The tract at residues 265 to 272 (VLFLNKKD) is G4 motif. The interval 324–329 (TCATDT) is G5 motif.

It belongs to the G-alpha family. G(i/o/t/z) subfamily. In terms of assembly, g proteins are composed of 3 units; alpha, beta and gamma, respectively GNAT3, GNB1 and GNG13 for Gustducin heterotrimer for bitter taste transduction. The alpha chain contains the guanine nucleotide binding site. Component of the TAS2R14-GNAT3 complex, consisting of TAS2R14, GNAT3, GNB1 and GNG2; within the complex interacts with TAS2R14; this complex plays a role in the perception of bitterness. Gustducin heterotrimer may also be composed of GNAT3, GNB3 and GNG13. In terms of tissue distribution, expressed in epithelial cells of taste buds of the circumvallate, foliate and fungiform. Detected in various region of the respiratory track. Expressed also in spermatozoa.

It is found in the cytoplasm. Functionally, guanine nucleotide-binding protein (G protein) alpha subunit playing a prominent role in bitter and sweet taste transduction as well as in umami (monosodium glutamate, monopotassium glutamate, and inosine monophosphate) taste transduction. The sequence is that of Guanine nucleotide-binding protein G(t) subunit alpha-3 (GNAT3) from Bos taurus (Bovine).